Reading from the N-terminus, the 392-residue chain is Formate-dependent phosphoribosylglycinamide formyltransferase (392 aa).

Residues 22–23 (EL) and E82 each bind N(1)-(5-phospho-beta-D-ribosyl)glycinamide. Residues R114, K155, 160-165 (SSGKGQ), 195-198 (EGVV), and E203 contribute to the ATP site. The ATP-grasp domain maps to 119–308 (RLAAEELQLP…EFALHVRAFL (190 aa)). Mg(2+)-binding residues include E267 and E279. Residues D286, K355, and 362 to 363 (RR) each bind N(1)-(5-phospho-beta-D-ribosyl)glycinamide.

Belongs to the PurK/PurT family. In terms of assembly, homodimer.

The catalysed reaction is N(1)-(5-phospho-beta-D-ribosyl)glycinamide + formate + ATP = N(2)-formyl-N(1)-(5-phospho-beta-D-ribosyl)glycinamide + ADP + phosphate + H(+). It functions in the pathway purine metabolism; IMP biosynthesis via de novo pathway; N(2)-formyl-N(1)-(5-phospho-D-ribosyl)glycinamide from N(1)-(5-phospho-D-ribosyl)glycinamide (formate route): step 1/1. In terms of biological role, involved in the de novo purine biosynthesis. Catalyzes the transfer of formate to 5-phospho-ribosyl-glycinamide (GAR), producing 5-phospho-ribosyl-N-formylglycinamide (FGAR). Formate is provided by PurU via hydrolysis of 10-formyl-tetrahydrofolate. The polypeptide is Formate-dependent phosphoribosylglycinamide formyltransferase (Shigella dysenteriae serotype 1 (strain Sd197)).